The sequence spans 291 residues: Syntaxin-1A homolog (291 aa).

The segment at 1 to 24 (MTKDRLSALKAAQSEDEQDDDMHM) is disordered. Over 1-266 (MTKDRLSALK…QYQSKARRKK (266 aa)) the chain is Cytoplasmic. Positions 69–95 (NDQKTKEELDELMAVIKRAANKVRGKL) form a coiled coil. Residues 193-255 (LADIEARHND…DRAVADTKKA (63 aa)) enclose the t-SNARE coiled-coil homology domain. A helical; Anchor for type IV membrane protein membrane pass occupies residues 267–287 (ICILVTGVILITGLIIFILFY). The Extracellular portion of the chain corresponds to 288–291 (AKVL).

This sequence belongs to the syntaxin family. Interacts (via N-terminus, in open or in closed conformation) with unc-18; the interaction is direct. Interaction in open conformation with unc-18 promotes synaptic vesicle docking and tethering. Interaction via N-terminus with unc-18 mediates the secretion of the neurotransmitter acetylcholine from cholinergic motor neurons. Interaction with unc-18 is reduced in the presence of unc-13. In terms of tissue distribution, expressed throughout the head ganglion, nerve ring, ventral cord, dorsal cord, intestine, vulva and spermatheca.

It localises to the cell membrane. It is found in the cell projection. Its subcellular location is the axon. The protein localises to the dendrite. The protein resides in the perikaryon. In terms of biological role, plays a critical role in several secretory processes, including cuticle secretion and neurotransmitter release, and probably assists in neuronal membrane maturation or the final stages of neuronal differentiation. Plays a role in synaptic vesicle docking and tethering through its association with unc-18. Through binding to unc-18 mediates the release of the neurotransmitter acetylcholine from cholinergic motor neurons, and thereby promotes locomotory behaviors. Essential for embryonic viability and development. Has a role in dauer formation and adult life span. Required for locomotion. Probably by regulating neuronal transmission downstream of lin-3 and receptor lin-23 and phospholipase plc-3 and upstream of innexin unc-7 and egl-4/PKG in ALA neurons, involved in the decrease in pharyngeal pumping during the quiescent state that precedes each larval molt. This chain is Syntaxin-1A homolog, found in Caenorhabditis elegans.